The chain runs to 228 residues: Ribosomal RNA small subunit methyltransferase G (228 aa).

Residues Gly-89, Leu-94, 140-141 (VE), and Arg-159 contribute to the S-adenosyl-L-methionine site.

Belongs to the methyltransferase superfamily. RNA methyltransferase RsmG family.

The protein localises to the cytoplasm. The catalysed reaction is guanosine(527) in 16S rRNA + S-adenosyl-L-methionine = N(7)-methylguanosine(527) in 16S rRNA + S-adenosyl-L-homocysteine. In terms of biological role, specifically methylates the N7 position of guanine in position 527 of 16S rRNA. The chain is Ribosomal RNA small subunit methyltransferase G from Burkholderia cenocepacia (strain HI2424).